We begin with the raw amino-acid sequence, 474 residues long: Cytochrome c-552 (474 aa).

The signal sequence occupies residues methionine 1–alanine 29. Histidine 91 lines the heme c pocket. Residues cysteine 119, cysteine 122, and lysine 123 each contribute to the heme site. Positions 157, 160, 161, 206, 209, and 210 each coordinate heme c. Ca(2+) is bound by residues glutamate 212, tyrosine 213, lysine 258, and glutamine 260. Tyrosine 213 is a substrate binding site. Substrate is bound at residue histidine 261. Positions 272, 279, 282, 283, 298, 311, 314, 315, and 390 each coordinate heme c.

It belongs to the cytochrome c-552 family. The cofactor is Ca(2+). Heme c is required as a cofactor.

The protein localises to the periplasm. The enzyme catalyses 6 Fe(III)-[cytochrome c] + NH4(+) + 2 H2O = 6 Fe(II)-[cytochrome c] + nitrite + 8 H(+). It functions in the pathway nitrogen metabolism; nitrate reduction (assimilation). In terms of biological role, catalyzes the reduction of nitrite to ammonia, consuming six electrons in the process. The chain is Cytochrome c-552 from Vibrio vulnificus (strain CMCP6).